The primary structure comprises 87 residues: Putative phytosulfokines 4 (87 aa).

Positions 1–23 (MANLSTLITIALLLCATMLTCSA) are cleaved as a signal peptide. A propeptide spanning residues 24-77 (RPEPAYFASFTTSPADTLSLEMIESKLHEVAGESCDKEDDEDCLVRRTLTAHLD) is cleaved from the precursor. Residues Tyr78 and Tyr80 each carry the sulfotyrosine modification. Positions 83–87 (KNNHH) are excised as a propeptide.

Belongs to the phytosulfokine family. Post-translationally, sulfation is important for activity and for the binding to a putative membrane receptor.

It localises to the secreted. Promotes plant cell differentiation, organogenesis and somatic embryogenesis as well as cell proliferation. This is Putative phytosulfokines 4 (PSK4) from Arabidopsis thaliana (Mouse-ear cress).